Consider the following 236-residue polypeptide: MGRGKIEIKRIENTTNRQVTFCKRRNGLLKKAYELSVLCDAEVALIVFSSRGRLYEYANNSVKSTVERYKKANSDTSNSGTVAEVNAQHYQQESSKLRQQISSLQNANSRTIVGDSINTMSLRDLKQVENRLEKGIAKIRARKNELLYAEVEYMQKREVELQNDNMYLRSKVVENERGQQPLNMMGAASTSEYDHMVNNPYDSRNFLQVNIMQQPQHYAHQLQPTTLQLGQQPAFN.

The MADS-box domain occupies 1–61 (MGRGKIEIKR…GRLYEYANNS (61 aa)). One can recognise a K-box domain in the interval 87–178 (AQHYQQESSK…RSKVVENERG (92 aa)).

Expressed in lemmas, paleas and lodicules.

It is found in the nucleus. Its function is as follows. Probable transcription factor involved in the development of floral organs. Acts as C-class protein in association with MADS58. Involved in the control of lodicule number (whorl 2), stamen specification (whorl 3) and floral meristem determinacy (whorl 4), but not in the regulation of carpel morphogenesis. Plays a more predominant role in controlling lodicule development and in specifying stamen identity than MADS58. The sequence is that of MADS-box transcription factor 3 (MADS3) from Oryza sativa subsp. japonica (Rice).